Consider the following 460-residue polypeptide: tRNA-2-methylthio-N(6)-dimethylallyladenosine synthase (460 aa).

Residues R23–R138 enclose the MTTase N-terminal domain. C32, C68, C101, C176, C180, and C183 together coordinate [4Fe-4S] cluster. Positions A162 to A394 constitute a Radical SAM core domain. The TRAM domain maps to A397–A460.

This sequence belongs to the methylthiotransferase family. MiaB subfamily. In terms of assembly, monomer. It depends on [4Fe-4S] cluster as a cofactor.

It localises to the cytoplasm. The catalysed reaction is N(6)-dimethylallyladenosine(37) in tRNA + (sulfur carrier)-SH + AH2 + 2 S-adenosyl-L-methionine = 2-methylsulfanyl-N(6)-dimethylallyladenosine(37) in tRNA + (sulfur carrier)-H + 5'-deoxyadenosine + L-methionine + A + S-adenosyl-L-homocysteine + 2 H(+). Its function is as follows. Catalyzes the methylthiolation of N6-(dimethylallyl)adenosine (i(6)A), leading to the formation of 2-methylthio-N6-(dimethylallyl)adenosine (ms(2)i(6)A) at position 37 in tRNAs that read codons beginning with uridine. In Anaeromyxobacter sp. (strain Fw109-5), this protein is tRNA-2-methylthio-N(6)-dimethylallyladenosine synthase.